The sequence spans 150 residues: Cytochrome c oxidase subunit 5A, mitochondrial (150 aa).

The N-terminal 41 residues, 1–41 (MLGTALRRCAVAAASRAGSRGLLHPTPVPGPTAAIQSIRCY), are a transit peptide targeting the mitochondrion. Positions 2 to 17 (LGTALRRCAVAAASRA) match the SIFI-degron motif. 2 positions are modified to N6-acetyllysine: Lys-87 and Lys-113. Thr-141 carries the phosphothreonine modification.

Belongs to the cytochrome c oxidase subunit 5A family. Component of the cytochrome c oxidase (complex IV, CIV), a multisubunit enzyme composed of 14 subunits. The complex is composed of a catalytic core of 3 subunits MT-CO1, MT-CO2 and MT-CO3, encoded in the mitochondrial DNA, and 11 supernumerary subunits COX4I, COX5A, COX5B, COX6A, COX6B, COX6C, COX7A, COX7B, COX7C, COX8 and NDUFA4, which are encoded in the nuclear genome. The complex exists as a monomer or a dimer and forms supercomplexes (SCs) in the inner mitochondrial membrane with NADH-ubiquinone oxidoreductase (complex I, CI) and ubiquinol-cytochrome c oxidoreductase (cytochrome b-c1 complex, complex III, CIII), resulting in different assemblies (supercomplex SCI(1)III(2)IV(1) and megacomplex MCI(2)III(2)IV(2)). Interacts with AFG1L. Interacts with RAB5IF. In terms of processing, in response to mitochondrial stress, the precursor protein is ubiquitinated by the SIFI complex in the cytoplasm before mitochondrial import, leading to its degradation. Within the SIFI complex, UBR4 initiates ubiquitin chain that are further elongated or branched by KCMF1.

The protein resides in the mitochondrion inner membrane. It functions in the pathway energy metabolism; oxidative phosphorylation. Component of the cytochrome c oxidase, the last enzyme in the mitochondrial electron transport chain which drives oxidative phosphorylation. The respiratory chain contains 3 multisubunit complexes succinate dehydrogenase (complex II, CII), ubiquinol-cytochrome c oxidoreductase (cytochrome b-c1 complex, complex III, CIII) and cytochrome c oxidase (complex IV, CIV), that cooperate to transfer electrons derived from NADH and succinate to molecular oxygen, creating an electrochemical gradient over the inner membrane that drives transmembrane transport and the ATP synthase. Cytochrome c oxidase is the component of the respiratory chain that catalyzes the reduction of oxygen to water. Electrons originating from reduced cytochrome c in the intermembrane space (IMS) are transferred via the dinuclear copper A center (CU(A)) of subunit 2 and heme A of subunit 1 to the active site in subunit 1, a binuclear center (BNC) formed by heme A3 and copper B (CU(B)). The BNC reduces molecular oxygen to 2 water molecules using 4 electrons from cytochrome c in the IMS and 4 protons from the mitochondrial matrix. In Otolemur crassicaudatus (Brown greater galago), this protein is Cytochrome c oxidase subunit 5A, mitochondrial (COX5A).